The primary structure comprises 130 residues: Small ribosomal subunit protein uS8 (130 aa).

This sequence belongs to the universal ribosomal protein uS8 family. Part of the 30S ribosomal subunit. Contacts proteins S5 and S12.

Its function is as follows. One of the primary rRNA binding proteins, it binds directly to 16S rRNA central domain where it helps coordinate assembly of the platform of the 30S subunit. The sequence is that of Small ribosomal subunit protein uS8 from Vibrio vulnificus (strain CMCP6).